The primary structure comprises 131 residues: Protein E11 homolog (131 aa).

This sequence belongs to the chordopoxvirinae E11 family.

The protein localises to the virion. The chain is Protein E11 homolog from Fowlpox virus (strain NVSL) (FPV).